The chain runs to 560 residues: DNA ligase B (560 aa).

The active-site N6-AMP-lysine intermediate is Lys124.

The protein belongs to the NAD-dependent DNA ligase family. LigB subfamily.

It catalyses the reaction NAD(+) + (deoxyribonucleotide)n-3'-hydroxyl + 5'-phospho-(deoxyribonucleotide)m = (deoxyribonucleotide)n+m + AMP + beta-nicotinamide D-nucleotide.. Functionally, catalyzes the formation of phosphodiester linkages between 5'-phosphoryl and 3'-hydroxyl groups in double-stranded DNA using NAD as a coenzyme and as the energy source for the reaction. In Escherichia coli O7:K1 (strain IAI39 / ExPEC), this protein is DNA ligase B.